The following is a 612-amino-acid chain: E3 ubiquitin-protein ligase synoviolin (612 aa).

The Cytoplasmic portion of the chain corresponds to 1 to 4; sequence MFRT. The tract at residues 1–251 is involved in FAM8A1 interaction; sequence MFRTAVMMAA…LFAIRPMYLA (251 aa). A helical transmembrane segment spans residues 5–25; sequence AVMMAASLALTGAVVAHAYYL. The interaction with SEL1L stretch occupies residues 21-42; it reads HAYYLKHQFYPTVVYLTKSSPS. The Lumenal portion of the chain corresponds to 26–41; sequence KHQFYPTVVYLTKSSP. The helical transmembrane segment at 42–62 threads the bilayer; that stretch reads SMAVLYIQAFVLVFLLGKVMG. Residues 63-98 are Cytoplasmic-facing; the sequence is KVFFGQLRAAEMEHLLERSWYAVTETCLAFTVFRDD. A helical transmembrane segment spans residues 99 to 119; it reads FSPRFVALFTLLLFLKCFHWL. The Lumenal portion of the chain corresponds to 120-140; sequence AEDRVDFMERSPNISWLFHCR. The chain crosses the membrane as a helical span at residues 141-161; the sequence is IVSLMFLLGILDFLFVSHAYH. Topologically, residues 162 to 169 are cytoplasmic; it reads SILTRGAS. A helical membrane pass occupies residues 170–190; the sequence is VQLVFGFEYAILMTMVLTIFI. Residues 191-224 lie on the Lumenal side of the membrane; that stretch reads KYVLHSVDLQSENPWDNKAVYMLYTELFTGFIKV. The chain crosses the membrane as a helical span at residues 225–245; that stretch reads LLYMAFMTIMIKVHTFPLFAI. The interaction with p53/TP53 stretch occupies residues 236–270; sequence KVHTFPLFAIRPMYLAMRQFKKAVTDAIMSRRAIR. Residues 246–612 are Cytoplasmic-facing; it reads RPMYLAMRQF…LQKLESPVAH (367 aa). Zn(2+) contacts are provided by C291, C294, C307, H309, H312, C315, C326, and C329. The segment at 291 to 330 adopts an RING-type; atypical zinc-finger fold; the sequence is CIICREEMVTGAKRLPCNHIFHTSCLRSWFQRQQTCPTCR. 2 disordered regions span residues 337–375 and 393–449; these read SLPAQSPPPPEPADQGPPPAPHPQPLLPQPPNFPQGLLP and PVPP…PGFP. Pro residues-rich tracts occupy residues 341–375 and 393–409; these read QSPPPPEPADQGPPPAPHPQPLLPQPPNFPQGLLP and PVPPPPSSGEAAAPPPT. The segment covering 416 to 434 has biased composition (low complexity); that stretch reads PSGAATTTAAGTSTSAPAP. Positions 435 to 449 are enriched in pro residues; it reads GSVPGPEAGPAPGFP. The interval 474-529 is HAF-H domain; necessary to form higher-order Hrd1 complexes; that stretch reads GFAGLTPEELRALEGHERQHLEARLQSLRNIHTLLDAAMLQINQYLTVLASLGPPR. The tract at residues 530–612 is disordered; that stretch reads PATSVNPTEE…LQKLESPVAH (83 aa). Positions 539–559 are enriched in low complexity; it reads ETASTVVSAAPSTSAPSSEAP. Residues 560–570 are compositionally biased toward pro residues; the sequence is TPSPGASPPIP. The segment covering 586-595 has biased composition (acidic residues); the sequence is ELPEDGEPDA. S608 carries the phosphoserine modification.

Belongs to the HRD1 family. As to quaternary structure, homodimer. Interacts with p53/TP53. Interacts with HTT. Component of the HRD1 complex, which comprises at least SYNV1/HRD1, DERL1/2, FAM8A1, HERPUD1/HERP, OS9, SEL1L and UBE2J1. FAM8A1 is stabilized by interaction with SYNV1, which prevents its proteasomal degradation. OS9 and UBE2J1 recruitment to the complex may be mediated by SEL1L. SYNV1 assembles with SEL1L and FAM8A1 through its transmembrane domains, but interaction with its cytoplasmic domain is required to confer stability to FAM8A1 and enhance recruitment of HERPUD1. The HRD1 complex also associates with VIMP and may transfer misfolded proteins from the endoplasmic reticulum to VCP. May form a complex with ERLEC1; HSPA5; OS9 and SEL1L. Interacts with VCP. Interacts with UBXN6. Interacts with BAG6. Interacts with NFE2L1. Interacts (via N-terminus) with components of the pre-B cell receptor, including IGLL1 and VPREB1A. Interacts with CREB3L3; this interaction leads to CREB3L3 ubiquitination and proteasomal degradation. Post-translationally, auto-ubiquitinated. Deubiquitinated by USP19. In terms of tissue distribution, widely expressed, with highest levels in bone, spleen, lung and testis. In the brain, present in neurons but not in glial cells. Up-regulated in synovial tissues from mice with collagen-induced arthritis (at protein level). Expressed in the liver.

It localises to the endoplasmic reticulum membrane. The enzyme catalyses S-ubiquitinyl-[E2 ubiquitin-conjugating enzyme]-L-cysteine + [acceptor protein]-L-lysine = [E2 ubiquitin-conjugating enzyme]-L-cysteine + N(6)-ubiquitinyl-[acceptor protein]-L-lysine.. The protein operates within protein modification; protein ubiquitination. Functionally, E3 ubiquitin-protein ligase which accepts ubiquitin specifically from endoplasmic reticulum-associated UBC7 E2 ligase and transfers it to substrates, promoting their degradation. Component of the endoplasmic reticulum quality control (ERQC) system also called ER-associated degradation (ERAD) involved in ubiquitin-dependent degradation of misfolded endoplasmic reticulum proteins. Also promotes the degradation of normal but naturally short-lived proteins such as SGK. Protects cells from ER stress-induced apoptosis. Sequesters p53/TP53 in the cytoplasm and promotes its degradation, thereby negatively regulating its biological function in transcription, cell cycle regulation and apoptosis. Required for embryogenesis. Mediates the ubiquitination and subsequent degradation of cytoplasmic NFE2L1. During the early stage of B cell development, required for degradation of the pre-B cell receptor (pre-BCR) complex, hence supporting further differentiation into mature B cells. The protein is E3 ubiquitin-protein ligase synoviolin (Syvn1) of Mus musculus (Mouse).